The sequence spans 283 residues: uncharacterized protein (283 aa).

Residues 208–232 (SMENKVNETQNSKEDEKKKNDGDGK) show a composition bias toward basic and acidic residues. The interval 208-237 (SMENKVNETQNSKEDEKKKNDGDGKRSKKK) is disordered.

This is an uncharacterized protein from Saccharomyces cerevisiae (strain ATCC 204508 / S288c) (Baker's yeast).